A 199-amino-acid chain; its full sequence is Recombination protein RecR (199 aa).

Residues 56 to 71 (CQQCNNYTEQTLCALC) form a C4-type zinc finger. Residues 79–174 (TLLCVVESPA…NISQLAHGIP (96 aa)) form the Toprim domain.

It belongs to the RecR family.

May play a role in DNA repair. It seems to be involved in an RecBC-independent recombinational process of DNA repair. It may act with RecF and RecO. In Legionella pneumophila subsp. pneumophila (strain Philadelphia 1 / ATCC 33152 / DSM 7513), this protein is Recombination protein RecR.